Here is a 150-residue protein sequence, read N- to C-terminus: UPF0506 protein SJCHGC03144 (150 aa).

The first 18 residues, 1-18 (MNTCIQLLILCLVTVINS), serve as a signal peptide directing secretion. 4 N-linked (GlcNAc...) asparagine glycosylation sites follow: asparagine 20, asparagine 36, asparagine 52, and asparagine 110. 3 cysteine pairs are disulfide-bonded: cysteine 116–cysteine 130, cysteine 123–cysteine 134, and cysteine 129–cysteine 139.

The protein belongs to the UPF0506 family.

The protein resides in the secreted. This chain is UPF0506 protein SJCHGC03144, found in Schistosoma japonicum (Blood fluke).